The chain runs to 129 residues: Small ribosomal subunit protein uS8c (129 aa).

Belongs to the universal ribosomal protein uS8 family. As to quaternary structure, part of the 30S ribosomal subunit.

It is found in the plastid. It localises to the chloroplast. Functionally, one of the primary rRNA binding proteins, it binds directly to 16S rRNA central domain where it helps coordinate assembly of the platform of the 30S subunit. This Oltmannsiellopsis viridis (Marine flagellate) protein is Small ribosomal subunit protein uS8c (rps8).